The primary structure comprises 255 residues: Pyrroloquinoline-quinone synthase (255 aa).

It belongs to the PqqC family.

It carries out the reaction 6-(2-amino-2-carboxyethyl)-7,8-dioxo-1,2,3,4,7,8-hexahydroquinoline-2,4-dicarboxylate + 3 O2 = pyrroloquinoline quinone + 2 H2O2 + 2 H2O + H(+). It participates in cofactor biosynthesis; pyrroloquinoline quinone biosynthesis. Functionally, ring cyclization and eight-electron oxidation of 3a-(2-amino-2-carboxyethyl)-4,5-dioxo-4,5,6,7,8,9-hexahydroquinoline-7,9-dicarboxylic-acid to PQQ. The sequence is that of Pyrroloquinoline-quinone synthase from Cereibacter sphaeroides (strain ATCC 17023 / DSM 158 / JCM 6121 / CCUG 31486 / LMG 2827 / NBRC 12203 / NCIMB 8253 / ATH 2.4.1.) (Rhodobacter sphaeroides).